We begin with the raw amino-acid sequence, 696 residues long: DNA ligase (696 aa).

Residues 36–40 (DAEYD), 85–86 (SL), and E123 each bind NAD(+). K125 functions as the N6-AMP-lysine intermediate in the catalytic mechanism. Positions 146, 181, 319, and 343 each coordinate NAD(+). C437, C440, C455, and C461 together coordinate Zn(2+). The region spanning 618 to 696 (PEGTSLAGKT…EDGLKALLGL (79 aa)) is the BRCT domain.

It belongs to the NAD-dependent DNA ligase family. LigA subfamily. Mg(2+) serves as cofactor. It depends on Mn(2+) as a cofactor.

It catalyses the reaction NAD(+) + (deoxyribonucleotide)n-3'-hydroxyl + 5'-phospho-(deoxyribonucleotide)m = (deoxyribonucleotide)n+m + AMP + beta-nicotinamide D-nucleotide.. Functionally, DNA ligase that catalyzes the formation of phosphodiester linkages between 5'-phosphoryl and 3'-hydroxyl groups in double-stranded DNA using NAD as a coenzyme and as the energy source for the reaction. It is essential for DNA replication and repair of damaged DNA. This is DNA ligase from Bordetella bronchiseptica (strain ATCC BAA-588 / NCTC 13252 / RB50) (Alcaligenes bronchisepticus).